A 216-amino-acid polypeptide reads, in one-letter code: Uracil phosphoribosyltransferase (216 aa).

Residues arginine 84, arginine 109, and 137-145 (DPMLATGGS) contribute to the 5-phospho-alpha-D-ribose 1-diphosphate site. Residues isoleucine 202 and 207–209 (GDA) contribute to the uracil site. Residue aspartate 208 coordinates 5-phospho-alpha-D-ribose 1-diphosphate.

The protein belongs to the UPRTase family. It depends on Mg(2+) as a cofactor.

It carries out the reaction UMP + diphosphate = 5-phospho-alpha-D-ribose 1-diphosphate + uracil. It participates in pyrimidine metabolism; UMP biosynthesis via salvage pathway; UMP from uracil: step 1/1. Allosterically activated by GTP. Its function is as follows. Catalyzes the conversion of uracil and 5-phospho-alpha-D-ribose 1-diphosphate (PRPP) to UMP and diphosphate. The chain is Uracil phosphoribosyltransferase from Nostoc sp. (strain PCC 7120 / SAG 25.82 / UTEX 2576).